The sequence spans 689 residues: Glycine--tRNA ligase beta subunit (689 aa).

Belongs to the class-II aminoacyl-tRNA synthetase family. In terms of assembly, tetramer of two alpha and two beta subunits.

It localises to the cytoplasm. It catalyses the reaction tRNA(Gly) + glycine + ATP = glycyl-tRNA(Gly) + AMP + diphosphate. The sequence is that of Glycine--tRNA ligase beta subunit from Hamiltonella defensa subsp. Acyrthosiphon pisum (strain 5AT).